We begin with the raw amino-acid sequence, 121 residues long: SPbeta prophage-derived uncharacterized protein YorW (121 aa).

This Bacillus subtilis (strain 168) protein is SPbeta prophage-derived uncharacterized protein YorW (yorW).